A 235-amino-acid polypeptide reads, in one-letter code: Glucosamine-6-phosphate deaminase (235 aa).

The active-site Proton acceptor; for enolization step is the Asp62. Asn128 (for ring-opening step) is an active-site residue. The active-site Proton acceptor; for ring-opening step is His130. The active-site For ring-opening step is the Glu135.

It belongs to the glucosamine/galactosamine-6-phosphate isomerase family. NagB subfamily.

It carries out the reaction alpha-D-glucosamine 6-phosphate + H2O = beta-D-fructose 6-phosphate + NH4(+). The protein operates within amino-sugar metabolism; N-acetylneuraminate degradation; D-fructose 6-phosphate from N-acetylneuraminate: step 5/5. In terms of biological role, catalyzes the reversible isomerization-deamination of glucosamine 6-phosphate (GlcN6P) to form fructose 6-phosphate (Fru6P) and ammonium ion. This is Glucosamine-6-phosphate deaminase from Lactococcus lactis subsp. cremoris (strain SK11).